A 363-amino-acid polypeptide reads, in one-letter code: MGSAESKAQVTPSRPLRNHLLSRVNDPRSPTSGIPRTPIEVGESPRNTPQTVKEEEEEIPDSPEIFDPRSPTNGITRTPLRPPIHAVLNNLAKQLSEVFVAEDSSTEGGPLGFTGPEATNLERQVVESQTAPPAGEHVNDHEVEPSVEKAETQIDLEVCPGVEKVKSPIAEMLETLNDQEESPIAETLETMNDQEESPIAETMNDQEESPIAETLENLNDQAESPIAETLENLNDQAESPIAEMLDTLNDQEPVAVAQSVVSTESTQATGQQQKTRGKSPRSSGVKNVRQRPRKALLSSSSGRSPLRILQEDNSPNTNTQHRQAKKLSFQSEPALPHRALKISHPNWESSLNKENAEYGHSNS.

The segment covering 1 to 12 (MGSAESKAQVTP) has biased composition (polar residues). Disordered regions lie at residues 1-81 (MGSA…TPLR), 126-152 (VESQTAPPAGEHVNDHEVEPSVEKAET), 191-210 (MNDQEESPIAETMNDQEESP), and 231-363 (ENLN…HSNS). Residues 93 to 152 (KQLSEVFVAEDSSTEGGPLGFTGPEATNLERQVVESQTAPPAGEHVNDHEVEPSVEKAET) form an F-box-like region. Basic and acidic residues predominate over residues 137 to 152 (HVNDHEVEPSVEKAET). Acidic residues predominate over residues 192-210 (NDQEESPIAETMNDQEESP). Residues 259–285 (SVVSTESTQATGQQQKTRGKSPRSSGV) are compositionally biased toward polar residues. Residues 296-308 (LLSSSSGRSPLRI) show a composition bias toward low complexity. The segment covering 311–321 (EDNSPNTNTQH) has biased composition (polar residues). The KEN box motif lies at 353 to 355 (KEN).

As to quaternary structure, interacts with wee1, when wee1 is phosphorylated at 'Ser-38'. In terms of processing, phosphorylated. Ubiquitinated and degraded by the APC/C-Cdh1 complex during G1 phase.

Its subcellular location is the cytoplasm. The protein resides in the cytosol. The protein operates within protein modification; protein ubiquitination. Functionally, F-box-like protein which is required for entry into mitosis. Acts by participating in E3 ligase complexes that mediate the ubiquitination and degradation of WEE1 kinase at G2/M phase. This chain is Cell division cycle-associated protein 3 (cdca3), found in Xenopus laevis (African clawed frog).